We begin with the raw amino-acid sequence, 111 residues long: Large ribosomal subunit protein eL34B (111 aa).

Position 76 is a phosphotyrosine (Tyr76).

This sequence belongs to the eukaryotic ribosomal protein eL34 family. Component of the large ribosomal subunit (LSU). Mature yeast ribosomes consist of a small (40S) and a large (60S) subunit. The 40S small subunit contains 1 molecule of ribosomal RNA (18S rRNA) and at least 33 different proteins. The large 60S subunit contains 3 rRNA molecules (25S, 5.8S and 5S rRNA) and at least 46 different proteins.

The protein resides in the cytoplasm. Its subcellular location is the nucleus. The protein localises to the nucleolus. Its function is as follows. Component of the ribosome, a large ribonucleoprotein complex responsible for the synthesis of proteins in the cell. The small ribosomal subunit (SSU) binds messenger RNAs (mRNAs) and translates the encoded message by selecting cognate aminoacyl-transfer RNA (tRNA) molecules. The large subunit (LSU) contains the ribosomal catalytic site termed the peptidyl transferase center (PTC), which catalyzes the formation of peptide bonds, thereby polymerizing the amino acids delivered by tRNAs into a polypeptide chain. The nascent polypeptides leave the ribosome through a tunnel in the LSU and interact with protein factors that function in enzymatic processing, targeting, and the membrane insertion of nascent chains at the exit of the ribosomal tunnel. The chain is Large ribosomal subunit protein eL34B (rpl3402) from Schizosaccharomyces pombe (strain 972 / ATCC 24843) (Fission yeast).